A 253-amino-acid chain; its full sequence is Triosephosphate isomerase (253 aa).

9–11 (NWK) provides a ligand contact to substrate. H96 (electrophile) is an active-site residue. E169 acts as the Proton acceptor in catalysis. Substrate contacts are provided by residues G175, S215, and 236–237 (GG).

Belongs to the triosephosphate isomerase family. Homodimer.

Its subcellular location is the cytoplasm. The enzyme catalyses D-glyceraldehyde 3-phosphate = dihydroxyacetone phosphate. It participates in carbohydrate biosynthesis; gluconeogenesis. Its pathway is carbohydrate degradation; glycolysis; D-glyceraldehyde 3-phosphate from glycerone phosphate: step 1/1. Functionally, involved in the gluconeogenesis. Catalyzes stereospecifically the conversion of dihydroxyacetone phosphate (DHAP) to D-glyceraldehyde-3-phosphate (G3P). The protein is Triosephosphate isomerase of Borreliella burgdorferi (strain ZS7) (Borrelia burgdorferi).